Reading from the N-terminus, the 309-residue chain is Protein FdhE homolog (309 aa).

The disordered stretch occupies residues 1 to 22 (MSIRIVPQEQLEQNGKSTPEGH).

This sequence belongs to the FdhE family.

It is found in the cytoplasm. Necessary for formate dehydrogenase activity. The chain is Protein FdhE homolog from Pectobacterium carotovorum subsp. carotovorum (strain PC1).